Consider the following 310-residue polypeptide: Homeobox protein knotted-1-like 2 (310 aa).

The interval serine 178 to aspartate 208 is disordered. Residues serine 185 to alanine 197 are compositionally biased toward acidic residues. In terms of domain architecture, ELK spans aspartate 208–phenylalanine 228. The homeobox; TALE-type DNA-binding region spans serine 229 to serine 292.

Belongs to the TALE/KNOX homeobox family. As to quaternary structure, may form heterodimeric complex with the TALE/BELL protein BEL1, BLH1 and BLH2. Interacts with OFP12 and OFP14. Interacts with BZIP30. As to expression, expressed predominantly in shoot apices of seedlings, in the receptacle and developing pistil of flowers and in axillary buds of inflorescence stems.

The protein localises to the nucleus. May play a role in meristem function, and may be involved in maintaining cells in an undifferentiated, meristematic state. Probably binds to the DNA sequence 5'-TGAC-3'. This Arabidopsis thaliana (Mouse-ear cress) protein is Homeobox protein knotted-1-like 2 (KNAT2).